The primary structure comprises 22 residues: Chlorophyllase type 1 (22 aa).

It belongs to the AB hydrolase superfamily. Lipase family.

The catalysed reaction is a chlorophyll + H2O = a chlorophyllide + phytol + H(+). It participates in porphyrin-containing compound metabolism; chlorophyll degradation. Catalyzes the hydrolysis of ester bond in chlorophyll to yield chlorophyllide and phytol. This Chenopodium album (Fat hen) protein is Chlorophyllase type 1.